The primary structure comprises 138 residues: Class I hydrophobin 3 (138 aa).

Positions 1 to 16 are cleaved as a signal peptide; it reads MRFFLAITALVAAVTA. 4 cysteine pairs are disulfide-bonded: cysteine 40/cysteine 111, cysteine 48/cysteine 105, cysteine 49/cysteine 87, and cysteine 112/cysteine 130.

The protein belongs to the fungal hydrophobin family. Self-assembles to form functional amyloid fibrils called rodlets. Self-assembly into fibrillar rodlets occurs spontaneously at hydrophobic:hydrophilic interfaces and the rodlets further associate laterally to form amphipathic monolayers.

It localises to the secreted. Its subcellular location is the cell wall. Its function is as follows. Aerial growth, conidiation, and dispersal of filamentous fungi in the environment rely upon a capability of their secreting small amphipathic proteins called hydrophobins (HPBs) with low sequence identity. Class I can self-assemble into an outermost layer of rodlet bundles on aerial cell surfaces, conferring cellular hydrophobicity that supports fungal growth, development and dispersal; whereas Class II form highly ordered films at water-air interfaces through intermolecular interactions but contribute nothing to the rodlet structure. HYD3 is a class I hydrophobin that contributes to the formation of aerial hyphae and fruiting bodies. The sequence is that of Class I hydrophobin 3 from Cordyceps militaris (Caterpillar fungus).